Consider the following 240-residue polypeptide: UDP-2,3-diacylglucosamine hydrolase (240 aa).

Residues Asp8, His10, Asp41, Asn79, and His114 each coordinate Mn(2+). Residue 79–80 (NR) coordinates substrate. Substrate contacts are provided by Asp122, Ser160, Asn164, Lys167, and His195. The Mn(2+) site is built by His195 and His197.

The protein belongs to the LpxH family. It depends on Mn(2+) as a cofactor.

Its subcellular location is the cell inner membrane. The catalysed reaction is UDP-2-N,3-O-bis[(3R)-3-hydroxytetradecanoyl]-alpha-D-glucosamine + H2O = 2-N,3-O-bis[(3R)-3-hydroxytetradecanoyl]-alpha-D-glucosaminyl 1-phosphate + UMP + 2 H(+). The protein operates within glycolipid biosynthesis; lipid IV(A) biosynthesis; lipid IV(A) from (3R)-3-hydroxytetradecanoyl-[acyl-carrier-protein] and UDP-N-acetyl-alpha-D-glucosamine: step 4/6. In terms of biological role, hydrolyzes the pyrophosphate bond of UDP-2,3-diacylglucosamine to yield 2,3-diacylglucosamine 1-phosphate (lipid X) and UMP by catalyzing the attack of water at the alpha-P atom. Involved in the biosynthesis of lipid A, a phosphorylated glycolipid that anchors the lipopolysaccharide to the outer membrane of the cell. This Cellvibrio japonicus (strain Ueda107) (Pseudomonas fluorescens subsp. cellulosa) protein is UDP-2,3-diacylglucosamine hydrolase.